Here is a 107-residue protein sequence, read N- to C-terminus: Nucleoid-associated protein PPA0205 (107 aa).

This sequence belongs to the YbaB/EbfC family. Homodimer.

The protein resides in the cytoplasm. It localises to the nucleoid. Functionally, binds to DNA and alters its conformation. May be involved in regulation of gene expression, nucleoid organization and DNA protection. The sequence is that of Nucleoid-associated protein PPA0205 from Cutibacterium acnes (strain DSM 16379 / KPA171202) (Propionibacterium acnes).